We begin with the raw amino-acid sequence, 170 residues long: Acetyl-CoA decarbonylase/synthase complex subunit epsilon 2 (170 aa).

It belongs to the CdhB family. Heterotetramer of two alpha and two epsilon subunits. The ACDS complex is made up of alpha, epsilon, beta, gamma and delta subunits with a probable stoichiometry of (alpha(2)epsilon(2))(4)-beta(8)-(gamma(1)delta(1))(8).

It functions in the pathway one-carbon metabolism; methanogenesis from acetate. Part of a complex that catalyzes the reversible cleavage of acetyl-CoA, allowing growth on acetate as sole source of carbon and energy. The alpha-epsilon subcomponent functions as a carbon monoxide dehydrogenase. The precise role of the epsilon subunit is unclear; it may have a stabilizing role within the alpha(2)epsilon(2) component and/or be involved in electron transfer to FAD during a potential FAD-mediated CO oxidation. In Methanosarcina acetivorans (strain ATCC 35395 / DSM 2834 / JCM 12185 / C2A), this protein is Acetyl-CoA decarbonylase/synthase complex subunit epsilon 2 (cdhB2).